The sequence spans 513 residues: 2-isopropylmalate synthase (513 aa).

The Pyruvate carboxyltransferase domain maps to 4 to 268 (IKIFDTTLRD…ETGIKTELIY (265 aa)). The Mn(2+) site is built by aspartate 13, histidine 203, histidine 205, and asparagine 239. The segment at 392 to 513 (KLVHFHVHTG…GLLRKNGGAE (122 aa)) is regulatory domain.

It belongs to the alpha-IPM synthase/homocitrate synthase family. LeuA type 1 subfamily. In terms of assembly, homodimer. It depends on Mn(2+) as a cofactor.

Its subcellular location is the cytoplasm. It catalyses the reaction 3-methyl-2-oxobutanoate + acetyl-CoA + H2O = (2S)-2-isopropylmalate + CoA + H(+). The protein operates within amino-acid biosynthesis; L-leucine biosynthesis; L-leucine from 3-methyl-2-oxobutanoate: step 1/4. Functionally, catalyzes the condensation of the acetyl group of acetyl-CoA with 3-methyl-2-oxobutanoate (2-ketoisovalerate) to form 3-carboxy-3-hydroxy-4-methylpentanoate (2-isopropylmalate). In Thermotoga petrophila (strain ATCC BAA-488 / DSM 13995 / JCM 10881 / RKU-1), this protein is 2-isopropylmalate synthase.